The primary structure comprises 64 residues: Large ribosomal subunit protein bL35 (64 aa).

This sequence belongs to the bacterial ribosomal protein bL35 family.

The protein is Large ribosomal subunit protein bL35 of Streptomyces coelicolor (strain ATCC BAA-471 / A3(2) / M145).